The primary structure comprises 172 residues: Adenine phosphoribosyltransferase (172 aa).

It belongs to the purine/pyrimidine phosphoribosyltransferase family. As to quaternary structure, homodimer.

Its subcellular location is the cytoplasm. It carries out the reaction AMP + diphosphate = 5-phospho-alpha-D-ribose 1-diphosphate + adenine. The protein operates within purine metabolism; AMP biosynthesis via salvage pathway; AMP from adenine: step 1/1. Catalyzes a salvage reaction resulting in the formation of AMP, that is energically less costly than de novo synthesis. This chain is Adenine phosphoribosyltransferase, found in Methanococcus maripaludis (strain C7 / ATCC BAA-1331).